Consider the following 312-residue polypeptide: Serine acetyltransferase 5 (312 aa).

Basic and acidic residues predominate over residues 1-17 (MPPAGELRHQSPSKEKL). Residues 1–25 (MPPAGELRHQSPSKEKLSSVTQSDE) are disordered.

Belongs to the transferase hexapeptide repeat family. As to quaternary structure, homomultimer. In terms of tissue distribution, mostly expressed in stems, flowers and siliques. Localized in vascular tissues, particularly in phloem.

Its subcellular location is the cytoplasm. The catalysed reaction is L-serine + acetyl-CoA = O-acetyl-L-serine + CoA. Its pathway is amino-acid biosynthesis; L-cysteine biosynthesis; L-cysteine from L-serine: step 1/2. Feedback inhibitions by L-Ser and acetyl-CoA. The chain is Serine acetyltransferase 5 (SAT5) from Arabidopsis thaliana (Mouse-ear cress).